The primary structure comprises 473 residues: Spliceosome-associated protein CWC27 homolog (473 aa).

An N-acetylserine modification is found at Ser-2. Positions 11-166 constitute a PPIase cyclophilin-type domain; that stretch reads TNGKVLLKTT…NPHKIKSCEV (156 aa). Basic and acidic residues predominate over residues 177 to 193; that stretch reads REIKRPKKEKPEEEVKK. 2 disordered regions span residues 177–386 and 399–473; these read REIK…EDQT and QAIA…KERR. The stretch at 206–230 forms a coiled coil; it reads SFGEEAEEEEEEVNRVSQSMKGKSK. The segment covering 231–241 has biased composition (basic and acidic residues); sequence SSHDLLKDDPH. Over residues 257–266 the composition is skewed to acidic residues; it reads GDLDDGGEGE. Basic and acidic residues-rich tracts occupy residues 267 to 287, 305 to 348, and 360 to 372; these read SAEHDEYIDGDEKNLMRERIA, EVEK…KRSE, and EYRREKQKYEALR. Residues 305-378 adopt a coiled-coil conformation; it reads EVEKKSVNRS…EALRKQQSKK (74 aa). Residue Ser-347 is modified to Phosphoserine. Residues 405–419 show a composition bias toward acidic residues; it reads PENDIPETEVEDDEG. Basic and acidic residues-rich tracts occupy residues 426 to 438 and 458 to 473; these read QFEDKSRKVKDAS and RREESKKLMREKKERR.

It belongs to the cyclophilin-type PPIase family. As to quaternary structure, part of the activated spliceosome B/catalytic step 1 spliceosome, one of the forms of the spliceosome which has a well-formed active site but still cannot catalyze the branching reaction and is composed at least of 52 proteins, the U2, U5 and U6 snRNAs and the pre-mRNA. Recruited during early steps of activated spliceosome B maturation, it is probably one of the first proteins released from this complex as he matures to the spliceosome C complex. Component of the minor spliceosome, which splices U12-type introns.

It localises to the nucleus. As part of the spliceosome, plays a role in pre-mRNA splicing. Probable inactive PPIase with no peptidyl-prolyl cis-trans isomerase activity. As a component of the minor spliceosome, involved in the splicing of U12-type introns in pre-mRNAs. This chain is Spliceosome-associated protein CWC27 homolog, found in Pongo abelii (Sumatran orangutan).